Reading from the N-terminus, the 396-residue chain is Anaerobic glycerol-3-phosphate dehydrogenase subunit C (396 aa).

2 consecutive 4Fe-4S ferredoxin-type domains span residues 2–29 and 45–76; these read NDTS…PGYP and DGAL…GDII. Positions 9, 12, 15, 19, 56, 59, 62, and 66 each coordinate [4Fe-4S] cluster.

Composed of a catalytic GlpA/B dimer and of GlpC.

The protein resides in the cell inner membrane. It participates in polyol metabolism; glycerol degradation via glycerol kinase pathway; glycerone phosphate from sn-glycerol 3-phosphate (anaerobic route): step 1/1. Functionally, electron transfer protein; may also function as the membrane anchor for the GlpAB dimer. This Escherichia coli O157:H7 protein is Anaerobic glycerol-3-phosphate dehydrogenase subunit C (glpC).